The chain runs to 303 residues: Sulfotransferase 6B1 (303 aa).

65 to 70 contributes to the 3'-phosphoadenylyl sulfate binding site; sequence KCGSNW. Catalysis depends on H118, which acts as the Proton acceptor. Residues R140, S148, Y203, 237–242, and 259–261 each bind 3'-phosphoadenylyl sulfate; these read STFQAM and RKG.

It belongs to the sulfotransferase 1 family.

Its subcellular location is the cytoplasm. The protein localises to the cytosol. The catalysed reaction is thyroxine + 3'-phosphoadenylyl sulfate = thyroxine sulfate + adenosine 3',5'-bisphosphate + H(+). In terms of biological role, sulfotransferase that utilizes 3'-phospho-5'-adenylyl sulfate (PAPS) as sulfonate donor to catalyze the sulfate conjugation of thyroxine. Involved in the metabolism of thyroxine. The chain is Sulfotransferase 6B1 (SULT6B1) from Pan troglodytes (Chimpanzee).